Reading from the N-terminus, the 89-residue chain is Putative regulatory protein CLL_A1210 (89 aa).

It belongs to the RemA family.

The sequence is that of Putative regulatory protein CLL_A1210 from Clostridium botulinum (strain Eklund 17B / Type B).